A 115-amino-acid polypeptide reads, in one-letter code: Large ribosomal subunit protein bL19 (115 aa).

It belongs to the bacterial ribosomal protein bL19 family.

In terms of biological role, this protein is located at the 30S-50S ribosomal subunit interface and may play a role in the structure and function of the aminoacyl-tRNA binding site. This is Large ribosomal subunit protein bL19 from Latilactobacillus sakei subsp. sakei (strain 23K) (Lactobacillus sakei subsp. sakei).